The chain runs to 376 residues: N,N'-diacetylbacillosaminyl-diphospho-undecaprenol alpha-1,3-N-acetylgalactosaminyltransferase (376 aa).

This sequence belongs to the glycosyltransferase group 1 family.

The catalysed reaction is N,N'-diacetyl-alpha-D-bacillosaminyl-tri-trans,hepta-cis-undecaprenyl diphosphate + UDP-N-acetyl-alpha-D-galactosamine = N-acetyl-alpha-D-galactosaminyl-(1-&gt;3)-N,N'-diacetyl-alpha-D-bacillosaminyl-tri-trans,hepta-cis-undecaprenyl diphosphate + UDP + H(+). Its pathway is protein modification; protein glycosylation. Its function is as follows. Adds the first GalNAc residue on to the isoprenoid-linked bacillosamine (2,4-diacetamido-2,4,6-trideoxyglucose) carrier in the N-linked protein glycosylation pathway. Acts first on the undecaprenylpyrophosphate-linked bacillosamine (Und-PP-Bac) substrate to yield the disaccharide. In Campylobacter jejuni subsp. jejuni serotype O:2 (strain ATCC 700819 / NCTC 11168), this protein is N,N'-diacetylbacillosaminyl-diphospho-undecaprenol alpha-1,3-N-acetylgalactosaminyltransferase (pglA).